Here is a 134-residue protein sequence, read N- to C-terminus: ATP synthase epsilon chain, chloroplastic (134 aa).

The protein belongs to the ATPase epsilon chain family. In terms of assembly, F-type ATPases have 2 components, CF(1) - the catalytic core - and CF(0) - the membrane proton channel. CF(1) has five subunits: alpha(3), beta(3), gamma(1), delta(1), epsilon(1). CF(0) has three main subunits: a, b and c.

The protein resides in the plastid. It is found in the chloroplast thylakoid membrane. Functionally, produces ATP from ADP in the presence of a proton gradient across the membrane. The chain is ATP synthase epsilon chain, chloroplastic from Pelargonium hortorum (Common geranium).